The chain runs to 184 residues: Protein MEH1 (184 aa).

A lipid anchor (N-myristoyl glycine) is attached at glycine 2. 2 S-palmitoyl cysteine lipidation sites follow: cysteine 7 and cysteine 8. The stretch at 30 to 71 forms a coiled coil; the sequence is QGNANDEYDAEQMRLKEHEHEQKLLAREQELRDIVANTNDKL. Residues 89 to 147 form a disordered region; that stretch reads LQEALDKRQQEEGGDSREDERSAGDDNLSGHSVPSSGSAQATTHQTAPRTNTFTLLTSP. A compositionally biased stretch (basic and acidic residues) spans 92–112; that stretch reads ALDKRQQEEGGDSREDERSAG. Polar residues predominate over residues 117-147; sequence SGHSVPSSGSAQATTHQTAPRTNTFTLLTSP. Serine 146 and serine 149 each carry phosphoserine.

As to quaternary structure, component of the GSE complex composed of GTR1, GTR2, SLM4, MEH1 and LTV1. Component of the EGO complex, at least composed of GTR2, SLM4 and MEH1.

The protein localises to the vacuole membrane. In terms of biological role, component of the GSE complex, a GTPase complex required for intracellular sorting of GAP1 out of the endosome. Component of the EGO complex, a complex involved in the regulation of microautophagy. The polypeptide is Protein MEH1 (MEH1) (Saccharomyces cerevisiae (strain ATCC 204508 / S288c) (Baker's yeast)).